Here is a 616-residue protein sequence, read N- to C-terminus: Matrix metalloproteinase-21 (616 aa).

Residues 1–22 (MPTAPALGALLLLLGALTPGHQ) form the signal peptide. Residues 23 to 192 (EKLFHSRDHS…TSTSKIRKKR (170 aa)) constitute a propeptide that is removed on maturation. The Cysteine switch signature appears at 139–146 (PRCGVPDN). C141 is a Zn(2+) binding site. Positions 157 to 186 (SNSNNVTEKASGKSLNTTTNQNPENGTSTS) are disordered. Residues N161, N172, and N181 are each glycosylated (N-linked (GlcNAc...) asparagine). Residue H329 participates in Zn(2+) binding. Residue E330 is part of the active site. 2 residues coordinate Zn(2+): H333 and H339. C375 and C606 form a disulfide bridge. Hemopexin repeat units follow at residues 376-435 (EGSF…WHGI), 437-493 (AEGI…FPKI), 494-542 (PSPI…FPAV), and 549-605 (FGNI…WTDI). The N-linked (GlcNAc...) asparagine glycan is linked to N418. A glycan (N-linked (GlcNAc...) asparagine) is linked at N597.

The protein belongs to the peptidase M10A family. The cofactor is Zn(2+). It depends on Ca(2+) as a cofactor. The precursor is cleaved by a furin endopeptidase.

It is found in the secreted. In terms of biological role, may play a role in gastrulation-related cell movement. Plays a specialized role in the generation of left-right asymmetry during embryogenesis. May act as a negative regulator of the NOTCH-signaling pathway. The polypeptide is Matrix metalloproteinase-21 (MMP21) (Cynops pyrrhogaster (Japanese fire-bellied newt)).